We begin with the raw amino-acid sequence, 127 residues long: Holo-[acyl-carrier-protein] synthase (127 aa).

Residues D8 and E57 each coordinate Mg(2+).

This sequence belongs to the P-Pant transferase superfamily. AcpS family. It depends on Mg(2+) as a cofactor.

Its subcellular location is the cytoplasm. It carries out the reaction apo-[ACP] + CoA = holo-[ACP] + adenosine 3',5'-bisphosphate + H(+). Its function is as follows. Transfers the 4'-phosphopantetheine moiety from coenzyme A to a Ser of acyl-carrier-protein. The chain is Holo-[acyl-carrier-protein] synthase from Vesicomyosocius okutanii subsp. Calyptogena okutanii (strain HA).